Reading from the N-terminus, the 413-residue chain is Serine hydroxymethyltransferase (413 aa).

(6S)-5,6,7,8-tetrahydrofolate contacts are provided by residues leucine 115 and 119 to 121 (GHL). Lysine 224 is modified (N6-(pyridoxal phosphate)lysine).

This sequence belongs to the SHMT family. As to quaternary structure, homodimer. The cofactor is pyridoxal 5'-phosphate.

It is found in the cytoplasm. The catalysed reaction is (6R)-5,10-methylene-5,6,7,8-tetrahydrofolate + glycine + H2O = (6S)-5,6,7,8-tetrahydrofolate + L-serine. It functions in the pathway one-carbon metabolism; tetrahydrofolate interconversion. It participates in amino-acid biosynthesis; glycine biosynthesis; glycine from L-serine: step 1/1. Functionally, catalyzes the reversible interconversion of serine and glycine with tetrahydrofolate (THF) serving as the one-carbon carrier. This reaction serves as the major source of one-carbon groups required for the biosynthesis of purines, thymidylate, methionine, and other important biomolecules. Also exhibits THF-independent aldolase activity toward beta-hydroxyamino acids, producing glycine and aldehydes, via a retro-aldol mechanism. The protein is Serine hydroxymethyltransferase of Mycoplasma capricolum subsp. capricolum (strain California kid / ATCC 27343 / NCTC 10154).